The sequence spans 330 residues: Phosphate acyltransferase (330 aa).

It belongs to the PlsX family. Homodimer. Probably interacts with PlsY.

The protein localises to the cytoplasm. The enzyme catalyses a fatty acyl-[ACP] + phosphate = an acyl phosphate + holo-[ACP]. The protein operates within lipid metabolism; phospholipid metabolism. Functionally, catalyzes the reversible formation of acyl-phosphate (acyl-PO(4)) from acyl-[acyl-carrier-protein] (acyl-ACP). This enzyme utilizes acyl-ACP as fatty acyl donor, but not acyl-CoA. This is Phosphate acyltransferase from Streptococcus pneumoniae (strain JJA).